The chain runs to 300 residues: ATP-dependent (S)-NAD(P)H-hydrate dehydratase (300 aa).

The 280-residue stretch at 14-293 (LLALFKTVVP…NQIPSVFQTE (280 aa)) folds into the YjeF C-terminal domain. (6S)-NADPHX is bound by residues Gly-114 and 167–173 (NVMEFQR). Residues 198 to 202 (KGAND) and 219 to 228 (GSGRRCGGQG) contribute to the ATP site. Asp-229 contacts (6S)-NADPHX.

The protein belongs to the NnrD/CARKD family. Mg(2+) serves as cofactor.

It catalyses the reaction (6S)-NADHX + ATP = ADP + phosphate + NADH + H(+). The enzyme catalyses (6S)-NADPHX + ATP = ADP + phosphate + NADPH + H(+). Its function is as follows. Catalyzes the dehydration of the S-form of NAD(P)HX at the expense of ATP, which is converted to ADP. Together with NAD(P)HX epimerase, which catalyzes the epimerization of the S- and R-forms, the enzyme allows the repair of both epimers of NAD(P)HX, a damaged form of NAD(P)H that is a result of enzymatic or heat-dependent hydration. This chain is ATP-dependent (S)-NAD(P)H-hydrate dehydratase, found in Drosophila melanogaster (Fruit fly).